Here is a 299-residue protein sequence, read N- to C-terminus: Protease HtpX homolog (299 aa).

The next 2 membrane-spanning stretches (helical) occupy residues 15-35 and 37-57; these read MFLT…VLWQ and GVSY…QYYF. Position 140 (H140) interacts with Zn(2+). E141 is an active-site residue. Zn(2+) is bound at residue H144. A run of 2 helical transmembrane segments spans residues 158–178 and 187–207; these read FFAT…GAFG and NNIM…YFLI. E215 is a binding site for Zn(2+).

Belongs to the peptidase M48B family. Zn(2+) serves as cofactor.

The protein resides in the cell membrane. The polypeptide is Protease HtpX homolog (Moorella thermoacetica (strain ATCC 39073 / JCM 9320)).